A 31-amino-acid polypeptide reads, in one-letter code: Scolopendra 20566.01 Da toxin (31 aa).

Belongs to the CRISP family. Venom allergen 5-like subfamily. Contains 3 disulfide bonds. As to expression, expressed by the venom gland.

It is found in the secreted. The polypeptide is Scolopendra 20566.01 Da toxin (Scolopendra angulata (Barbados giant red centipede)).